The sequence spans 182 residues: NADH-quinone oxidoreductase subunit B 2 (182 aa).

Positions 55, 56, 120, and 150 each coordinate [4Fe-4S] cluster.

The protein belongs to the complex I 20 kDa subunit family. NDH-1 is composed of 14 different subunits. Subunits NuoB, C, D, E, F, and G constitute the peripheral sector of the complex. The cofactor is [4Fe-4S] cluster.

The protein localises to the cell inner membrane. The enzyme catalyses a quinone + NADH + 5 H(+)(in) = a quinol + NAD(+) + 4 H(+)(out). Functionally, NDH-1 shuttles electrons from NADH, via FMN and iron-sulfur (Fe-S) centers, to quinones in the respiratory chain. The immediate electron acceptor for the enzyme in this species is believed to be ubiquinone. Couples the redox reaction to proton translocation (for every two electrons transferred, four hydrogen ions are translocated across the cytoplasmic membrane), and thus conserves the redox energy in a proton gradient. The polypeptide is NADH-quinone oxidoreductase subunit B 2 (Sorangium cellulosum (strain So ce56) (Polyangium cellulosum (strain So ce56))).